The chain runs to 311 residues: MTASTPSNVMTLFLLRHGQSELNHENIFCGWIDAKLTEKGKEQARHSAELIEQYCKANNLRLPQIGYTSRLIRTQQTIETMCEEFKLKPQLQVVYDFNKIKLGDEFGSDDKDNMKIPILQTWRLNERHYGSWQGQRKPNVLKEYGKDKYMFIRRDYEGKPPPVDLDREMIQQENEKGSSTGYEFKEPNRQIKYELECSNHDIVLPDSESLREVVYRLNPFLQNVILKLANQYDESSCLIVGHGSSVRSLLKILEGISDDDIKNVDIPNGIPLVVELDKNNGLKFIRKFYLDPESAKINAEKVRNEGFIKNP.

Substrate is bound by residues 16 to 23 (RHGQSELN), 29 to 30 (CG), Arg73, 126 to 129 (ERHY), Lys137, 153 to 154 (RR), and 243 to 244 (GS). The active-site Tele-phosphohistidine intermediate is the His17. Catalysis depends on Glu126, which acts as the Proton donor/acceptor.

It belongs to the phosphoglycerate mutase family. BPG-dependent PGAM subfamily.

It localises to the cytoplasm. It catalyses the reaction (2R)-2-phosphoglycerate = (2R)-3-phosphoglycerate. It participates in carbohydrate degradation; glycolysis; pyruvate from D-glyceraldehyde 3-phosphate: step 3/5. Its function is as follows. Could be non-functional. In Saccharomyces cerevisiae (strain ATCC 204508 / S288c) (Baker's yeast), this protein is Phosphoglycerate mutase 2 (GPM2).